Consider the following 477-residue polypeptide: Glycogen synthase (477 aa).

Residue Lys-15 coordinates ADP-alpha-D-glucose.

This sequence belongs to the glycosyltransferase 1 family. Bacterial/plant glycogen synthase subfamily.

It catalyses the reaction [(1-&gt;4)-alpha-D-glucosyl](n) + ADP-alpha-D-glucose = [(1-&gt;4)-alpha-D-glucosyl](n+1) + ADP + H(+). The protein operates within glycan biosynthesis; glycogen biosynthesis. Synthesizes alpha-1,4-glucan chains using ADP-glucose. The polypeptide is Glycogen synthase (Klebsiella pneumoniae subsp. pneumoniae (strain ATCC 700721 / MGH 78578)).